The primary structure comprises 212 residues: KxDL motif-containing protein CG10681 (212 aa).

The segment at 128–159 (RSSLAEEAEDDTEAQAKKTAETPAPAAAKPVL) is disordered. Residues 148–157 (ETPAPAAAKP) show a composition bias toward low complexity.

Belongs to the KXD1 family.

The protein is KxDL motif-containing protein CG10681 of Drosophila melanogaster (Fruit fly).